Reading from the N-terminus, the 1254-residue chain is DNA polymerase gamma (1254 aa).

Residues 1125–1137 show a composition bias toward basic and acidic residues; the sequence is RKKENRIDDENKK. Disordered stretches follow at residues 1125–1145 and 1202–1240; these read RKKENRIDDENKKKLTRKKNT and YKKKPSQARTASSSPIRKTAKAVHSKKLPARKSSTTNRN. Over residues 1208 to 1217 the composition is skewed to polar residues; it reads QARTASSSPI. Residues 1219 to 1231 are compositionally biased toward basic residues; the sequence is KTAKAVHSKKLPA.

Belongs to the DNA polymerase type-A family. Mg(2+) is required as a cofactor.

It is found in the mitochondrion. The enzyme catalyses DNA(n) + a 2'-deoxyribonucleoside 5'-triphosphate = DNA(n+1) + diphosphate. In terms of biological role, involved in the replication of mitochondrial DNA. The sequence is that of DNA polymerase gamma (MIP1) from Saccharomyces cerevisiae (strain ATCC 204508 / S288c) (Baker's yeast).